The chain runs to 469 residues: Sorting and assembly machinery component 50 homolog (469 aa).

Residues 45–125 (VVVQHVHFDG…LDVTFEVTEL (81 aa)) form the POTRA domain. An N6-methyllysine modification is found at Lys-255.

This sequence belongs to the SAM50/omp85 family. Associates with the mitochondrial contact site and cristae organizing system (MICOS) complex, composed of at least MICOS10/MIC10, CHCHD3/MIC19, CHCHD6/MIC25, APOOL/MIC27, IMMT/MIC60, APOO/MIC23/MIC26 and QIL1/MIC13. This complex was also known under the names MINOS or MitOS complex. The MICOS complex associates with mitochondrial outer membrane proteins SAMM50, MTX1 and MTX2 (together described as components of the mitochondrial outer membrane sorting assembly machinery (SAM) complex) and DNAJC11, mitochondrial inner membrane protein TMEM11 and with HSPA9. The MICOS and SAM complexes together with DNAJC11 are part of a large protein complex spanning both membranes termed the mitochondrial intermembrane space bridging (MIB) complex. Interacts with IMMT/MIC60. Interacts with CHCHD3/MIC19. Interacts with ARMC1.

It is found in the mitochondrion outer membrane. Its subcellular location is the cytoplasm. The protein resides in the mitochondrion. In terms of biological role, plays a crucial role in the maintenance of the structure of mitochondrial cristae and the proper assembly of the mitochondrial respiratory chain complexes. Required for the assembly of TOMM40 into the TOM complex. The sequence is that of Sorting and assembly machinery component 50 homolog (SAMM50) from Bos taurus (Bovine).